We begin with the raw amino-acid sequence, 305 residues long: UDP-3-O-acyl-N-acetylglucosamine deacetylase (305 aa).

3 residues coordinate Zn(2+): H79, H238, and D242. H265 acts as the Proton donor in catalysis.

The protein belongs to the LpxC family. Zn(2+) serves as cofactor.

It carries out the reaction a UDP-3-O-[(3R)-3-hydroxyacyl]-N-acetyl-alpha-D-glucosamine + H2O = a UDP-3-O-[(3R)-3-hydroxyacyl]-alpha-D-glucosamine + acetate. It participates in glycolipid biosynthesis; lipid IV(A) biosynthesis; lipid IV(A) from (3R)-3-hydroxytetradecanoyl-[acyl-carrier-protein] and UDP-N-acetyl-alpha-D-glucosamine: step 2/6. Catalyzes the hydrolysis of UDP-3-O-myristoyl-N-acetylglucosamine to form UDP-3-O-myristoylglucosamine and acetate, the committed step in lipid A biosynthesis. This Vibrio campbellii (strain ATCC BAA-1116) protein is UDP-3-O-acyl-N-acetylglucosamine deacetylase.